Here is a 678-residue protein sequence, read N- to C-terminus: Platelet endothelial cell adhesion molecule (678 aa).

A signal peptide spans 1–17; that stretch reads MLLALLLTMLLYASLQA. The Extracellular portion of the chain corresponds to 18 to 589; sequence QENSFTINSI…VRVFLAPWKK (572 aa). Ig-like C2-type domains follow at residues 40–126, 135–213, 225–309, 315–391, 413–472, and 488–577; these read GQKL…PEVT, GGIV…FIRS, PKFQ…ILVN, PRPK…LVPV, GQII…NCHS, and PVDE…RSGP. Cysteines 47 and 99 form a disulfide. 2 N-linked (GlcNAc...) asparagine glycosylation sites follow: N74 and N141. 2 disulfide bridges follow: C142-C195 and C245-C293. N-linked (GlcNAc...) asparagine glycans are attached at residues N309, N345, N360, N424, and N540. Cystine bridges form between C336–C375, C420–C465, and C512–C561. Residues 590–610 traverse the membrane as a helical segment; sequence GLIAVVVIGVVIAALIVAAKY. Over 611–678 the chain is Cytoplasmic; it reads YFLRKAKAKQ…EPHQENGRLP (68 aa). The segment at 634-653 is disordered; that stretch reads NSNSEKVSEPSVETNSHYDS. The ITIM motif signature appears at 658–663; that stretch reads VEYTEV. Y660 bears the Phosphotyrosine; by FER mark.

As to quaternary structure, trans-homodimer (via Ig-like C2-type 1 and Ig-like C2-type 2 domains); trans-homodimerization is required for cell-cell interaction. Forms a complex with BDKRB2 and GNAQ. Interacts with BDKRB2 and GNAQ. Interacts with PTPN11. Interacts with FER. Interacts with CD177; the interaction is Ca(2+)-dependent; the interaction is direct. Phosphorylated on Ser and Tyr residues after cellular activation. In endothelial cells Fyn mediates mechanical-force (stretch or pull) induced tyrosine phosphorylation. Phosphorylated on tyrosine residues by FER and FES in response to FCER1 activation. Post-translationally, palmitoylation by ZDHHC21 is necessary for cell surface expression in endothelial cells and enrichment in membrane rafts.

It localises to the cell membrane. Its subcellular location is the membrane raft. The protein resides in the cell junction. Cell adhesion molecule which is required for leukocyte transendothelial migration (TEM) under most inflammatory conditions. Tyr-660 plays a critical role in TEM and is required for efficient trafficking of PECAM1 to and from the lateral border recycling compartment (LBRC) and is also essential for the LBRC membrane to be targeted around migrating leukocytes. Trans-homophilic interaction may play a role in endothelial cell-cell adhesion via cell junctions. Heterophilic interaction with CD177 plays a role in transendothelial migration of neutrophils. Homophilic ligation of PECAM1 prevents macrophage-mediated phagocytosis of neighboring viable leukocytes by transmitting a detachment signal. Promotes macrophage-mediated phagocytosis of apoptotic leukocytes by tethering them to the phagocytic cells; PECAM1-mediated detachment signal appears to be disabled in apoptotic leukocytes. Modulates bradykinin receptor BDKRB2 activation. Regulates bradykinin- and hyperosmotic shock-induced ERK1/2 activation in endothelial cells. Induces susceptibility to atherosclerosis. This Rattus norvegicus (Rat) protein is Platelet endothelial cell adhesion molecule (Pecam1).